Consider the following 344-residue polypeptide: AA9 family lytic polysaccharide monooxygenase D (344 aa).

The first 23 residues, 1 to 23 (MKTATSYAAFLLSALAALPHASA), serve as a signal peptide directing secretion. Histidine 24 provides a ligand contact to Cu(2+). A disulfide bond links cysteine 70 and cysteine 193. Histidine 179 is a binding site for O2. Residue tyrosine 190 participates in Cu(2+) binding. Asparagine 201 and asparagine 207 each carry an N-linked (GlcNAc...) asparagine glycan. Residues 240–321 (PPLSNLVSGD…PTTSGNLSAN (82 aa)) are disordered. The segment covering 259 to 292 (STSSATLSGGAAPTGTASGSTPAGTSQPSSTTGT) has biased composition (low complexity). Over residues 311-320 (APTTSGNLSA) the composition is skewed to polar residues. Residue asparagine 317 is glycosylated (N-linked (GlcNAc...) asparagine).

The protein belongs to the polysaccharide monooxygenase AA9 family. The cofactor is Cu(2+).

It localises to the secreted. It carries out the reaction [(1-&gt;4)-beta-D-glucosyl]n+m + reduced acceptor + O2 = 4-dehydro-beta-D-glucosyl-[(1-&gt;4)-beta-D-glucosyl]n-1 + [(1-&gt;4)-beta-D-glucosyl]m + acceptor + H2O.. In terms of biological role, lytic polysaccharide monooxygenase (LPMO) that depolymerizes crystalline and amorphous polysaccharides via the oxidation of scissile alpha- or beta-(1-4)-glycosidic bonds, yielding C1 or C4 oxidation products. Catalysis by LPMOs requires the reduction of the active-site copper from Cu(II) to Cu(I) by a reducing agent and H(2)O(2) or O(2) as a cosubstrate. The protein is AA9 family lytic polysaccharide monooxygenase D of Gloeophyllum trabeum (strain ATCC 11539 / FP-39264 / Madison 617) (Brown rot fungus).